The primary structure comprises 623 residues: Chaperone protein DnaK (623 aa).

Residue Thr197 is modified to Phosphothreonine; by autocatalysis. The segment at Lys600–Glu623 is disordered.

The protein belongs to the heat shock protein 70 family.

Functionally, acts as a chaperone. The sequence is that of Chaperone protein DnaK from Campylobacter concisus (strain 13826).